The chain runs to 187 residues: dTTP/UTP pyrophosphatase (187 aa).

Residue Asp-68 is the Proton acceptor of the active site.

This sequence belongs to the Maf family. YhdE subfamily. It depends on a divalent metal cation as a cofactor.

The protein localises to the cytoplasm. It carries out the reaction dTTP + H2O = dTMP + diphosphate + H(+). The enzyme catalyses UTP + H2O = UMP + diphosphate + H(+). Nucleoside triphosphate pyrophosphatase that hydrolyzes dTTP and UTP. May have a dual role in cell division arrest and in preventing the incorporation of modified nucleotides into cellular nucleic acids. The sequence is that of dTTP/UTP pyrophosphatase from Thermus thermophilus (strain ATCC BAA-163 / DSM 7039 / HB27).